A 394-amino-acid polypeptide reads, in one-letter code: NAD(P)H-quinone oxidoreductase subunit H (394 aa).

This sequence belongs to the complex I 49 kDa subunit family. In terms of assembly, NDH-1 can be composed of about 15 different subunits; different subcomplexes with different compositions have been identified which probably have different functions. The initiator methionine has been seen to be kept and removed.

It is found in the cellular thylakoid membrane. The catalysed reaction is a plastoquinone + NADH + (n+1) H(+)(in) = a plastoquinol + NAD(+) + n H(+)(out). The enzyme catalyses a plastoquinone + NADPH + (n+1) H(+)(in) = a plastoquinol + NADP(+) + n H(+)(out). NDH-1 shuttles electrons from an unknown electron donor, via FMN and iron-sulfur (Fe-S) centers, to quinones in the respiratory and/or the photosynthetic chain. The immediate electron acceptor for the enzyme in this species is believed to be plastoquinone. Couples the redox reaction to proton translocation, and thus conserves the redox energy in a proton gradient. Cyanobacterial NDH-1 also plays a role in inorganic carbon-concentration. This chain is NAD(P)H-quinone oxidoreductase subunit H (ndhH), found in Synechocystis sp. (strain ATCC 27184 / PCC 6803 / Kazusa).